We begin with the raw amino-acid sequence, 64 residues long: Large ribosomal subunit protein bL35 (64 aa).

The interval 1-54 is disordered; that stretch reads MPKIKSNSGAAKRFKKTAHGFKHKQSFRSHILTKKSTKRKRQLRGMKQIHDADK. Residues 12-44 are compositionally biased toward basic residues; it reads KRFKKTAHGFKHKQSFRSHILTKKSTKRKRQLR.

The protein belongs to the bacterial ribosomal protein bL35 family.

The protein is Large ribosomal subunit protein bL35 of Chromohalobacter salexigens (strain ATCC BAA-138 / DSM 3043 / CIP 106854 / NCIMB 13768 / 1H11).